Here is an 804-residue protein sequence, read N- to C-terminus: Leucine--tRNA ligase (804 aa).

Positions 40–51 match the 'HIGH' region motif; sequence PYPSGAGLHVGH. A 'KMSKS' region motif is present at residues 576–580; sequence KMSKS. Lys-579 provides a ligand contact to ATP.

Belongs to the class-I aminoacyl-tRNA synthetase family.

The protein localises to the cytoplasm. The enzyme catalyses tRNA(Leu) + L-leucine + ATP = L-leucyl-tRNA(Leu) + AMP + diphosphate. The protein is Leucine--tRNA ligase of Bacillus velezensis (strain DSM 23117 / BGSC 10A6 / LMG 26770 / FZB42) (Bacillus amyloliquefaciens subsp. plantarum).